The primary structure comprises 270 residues: DNA packaging protein OPG160 (270 aa).

ATP is bound at residue Gly-25 to Thr-32.

The protein belongs to the orthopoxvirus OPG160 protein family. In terms of assembly, interacts with protein OPG137.

Functionally, participates in viral DNA packaging and virion morphogenesis. The chain is DNA packaging protein OPG160 (OPG160) from Variola virus (isolate Human/India/Ind3/1967) (VARV).